The primary structure comprises 207 residues: Guanylate kinase (207 aa).

A Guanylate kinase-like domain is found at 5–184; sequence GNLFIVSAPS…ALADLRAIIR (180 aa). 12 to 19 is a binding site for ATP; sequence APSGAGKS.

It belongs to the guanylate kinase family.

The protein localises to the cytoplasm. It catalyses the reaction GMP + ATP = GDP + ADP. Its function is as follows. Essential for recycling GMP and indirectly, cGMP. This Shewanella oneidensis (strain ATCC 700550 / JCM 31522 / CIP 106686 / LMG 19005 / NCIMB 14063 / MR-1) protein is Guanylate kinase.